Reading from the N-terminus, the 228-residue chain is 7-cyano-7-deazaguanine synthase (228 aa).

An ATP-binding site is contributed by 9 to 19; the sequence is LSGGPDSTTVL. Zn(2+)-binding residues include C193, C203, C206, and C209.

The protein belongs to the QueC family. Requires Zn(2+) as cofactor.

The catalysed reaction is 7-carboxy-7-deazaguanine + NH4(+) + ATP = 7-cyano-7-deazaguanine + ADP + phosphate + H2O + H(+). The protein operates within purine metabolism; 7-cyano-7-deazaguanine biosynthesis. Catalyzes the ATP-dependent conversion of 7-carboxy-7-deazaguanine (CDG) to 7-cyano-7-deazaguanine (preQ(0)). This Rickettsia africae (strain ESF-5) protein is 7-cyano-7-deazaguanine synthase.